The chain runs to 362 residues: Chalcone synthase A (362 aa).

Cysteine 168 is an active-site residue.

Belongs to the thiolase-like superfamily. Chalcone/stilbene synthases family.

It carries out the reaction (E)-4-coumaroyl-CoA + 3 malonyl-CoA + 3 H(+) = 2',4,4',6'-tetrahydroxychalcone + 3 CO2 + 4 CoA. It participates in secondary metabolite biosynthesis; flavonoid biosynthesis. Functionally, the primary product of this enzyme is 4,2',4',6'-tetrahydroxychalcone (also termed naringenin-chalcone or chalcone) which can under specific conditions spontaneously isomerize into naringenin. The polypeptide is Chalcone synthase A (CHSA) (Ipomoea triloba (Trilobed morning glory)).